The chain runs to 340 residues: Ribose-phosphate pyrophosphokinase (340 aa).

Residues 47-49 (NGE) and 106-107 (RQ) each bind ATP. Mg(2+) contacts are provided by His-140 and Asp-182. Lys-206 is an active-site residue. Residues Arg-208, Asp-234, and 238-242 (DTAGT) each bind D-ribose 5-phosphate.

This sequence belongs to the ribose-phosphate pyrophosphokinase family. Class I subfamily. In terms of assembly, homohexamer. Requires Mg(2+) as cofactor.

It localises to the cytoplasm. It carries out the reaction D-ribose 5-phosphate + ATP = 5-phospho-alpha-D-ribose 1-diphosphate + AMP + H(+). It participates in metabolic intermediate biosynthesis; 5-phospho-alpha-D-ribose 1-diphosphate biosynthesis; 5-phospho-alpha-D-ribose 1-diphosphate from D-ribose 5-phosphate (route I): step 1/1. In terms of biological role, involved in the biosynthesis of the central metabolite phospho-alpha-D-ribosyl-1-pyrophosphate (PRPP) via the transfer of pyrophosphoryl group from ATP to 1-hydroxyl of ribose-5-phosphate (Rib-5-P). This is Ribose-phosphate pyrophosphokinase from Bifidobacterium longum (strain NCC 2705).